The primary structure comprises 436 residues: MANIFEVPQPGNDLLEKADQVRLASIKISQTENHNRIKALNSMADCLEKSTKEILEANNEDYTRAQKKGISKALLSRLKLSKEKLNSGIEGVRKVGDLADPVNQVQIKRELAKGLILERKTVPIGVLGVIFESRPDAVMQISSLAIRSGNGVMLKGGSEANLTNTAIVKALKKGLYESGLDKNAICLLTSRKDSMSMLNLEKYINLIIPRGSNELVKFIQENTRIPVLGHADGICHLFIDNEANLEMALSVALDSKIQYPAACNAIETLLVHKDIAQVFLEKAIPLFNSNDVKLIGDKRTVELGVKYEASVEDWQTEYLDLILSIKIVDDLEEAINHIQKFSSKHTDGIITENSTSAKKFMNVVDSAGVFHNCSTRFADGFRYGFGAEIGISTQTLPPRGPVGLEGLVTYKYFLNGDGNIVDDFSSGKAIYTHKDL.

The protein belongs to the gamma-glutamyl phosphate reductase family.

The protein resides in the cytoplasm. It carries out the reaction L-glutamate 5-semialdehyde + phosphate + NADP(+) = L-glutamyl 5-phosphate + NADPH + H(+). It functions in the pathway amino-acid biosynthesis; L-proline biosynthesis; L-glutamate 5-semialdehyde from L-glutamate: step 2/2. Catalyzes the NADPH-dependent reduction of L-glutamate 5-phosphate into L-glutamate 5-semialdehyde and phosphate. The product spontaneously undergoes cyclization to form 1-pyrroline-5-carboxylate. This chain is Gamma-glutamyl phosphate reductase, found in Prochlorococcus marinus (strain MIT 9312).